We begin with the raw amino-acid sequence, 674 residues long: MRKILVTNALPYANGDLHLGHMLGYIQSDIWVRFQKLQGNQCIFICGSDTHGTPIMLKAKSLGITPEELVTKYSNRHLQDFTDFEINFDNYHSTHNSLNKEIVEDIYNKLNNKNLISKKAIAQAYDPEAKMFLPDRFVKGTCPKCKAEDQYGDSCEVCGATYDPTELINPRSVISGQSPIQKNSEHFFFDLPALEKNIKDWIESNTLLQPEVANKLAEWFEQGLQSWDISRDAPYFGFAIPGTNEQKFFYVWLDAPMGYIASFKDYCNKNNINFGDFWGDSSSESELYHFIGKDIIYFHALFWPAILSSTGYKTPTSVFANGFLTVNGKKMSKSRGTFIQARTYLDNLEPSYLRYYFASRLTSRIDDIDLNLEEFVTKSNSDIVGKVVNIASRCAGFIYKKFDATLSGEIFDPELESEFSKNHDAITQAFEKREFAHAVRLIMALADKANQFIDYHKPWQLAKEEGQEQKVHQVCSQGINMFKVLIAYLKPIIPSIVAEAERFLNIQFISWADAPKFLINHKIDKFKPLATRIEKEKVDKILEDTKKMFENEQAPQSKKEEPKLDIAAECTFDDFMKVDLRIAKITEASHVEGADKLLKLILDLGGVTKQVFAGIKSAYKPEDLIGKHTIMVANLAPRKMKFGMSEGMVLAAGDGKGIYILEPHEGAQPGMRVK.

The 'HIGH' region motif lies at 11–21 (PYANGDLHLGH). 4 residues coordinate Zn(2+): Cys-142, Cys-145, Cys-155, and Cys-158. Positions 330 to 334 (KMSKS) match the 'KMSKS' region motif. Lys-333 serves as a coordination point for ATP. A tRNA-binding domain is found at 574 to 674 (DFMKVDLRIA…EGAQPGMRVK (101 aa)).

This sequence belongs to the class-I aminoacyl-tRNA synthetase family. MetG type 1 subfamily. Homodimer. Zn(2+) is required as a cofactor.

The protein localises to the cytoplasm. It carries out the reaction tRNA(Met) + L-methionine + ATP = L-methionyl-tRNA(Met) + AMP + diphosphate. In terms of biological role, is required not only for elongation of protein synthesis but also for the initiation of all mRNA translation through initiator tRNA(fMet) aminoacylation. In Francisella tularensis subsp. holarctica (strain OSU18), this protein is Methionine--tRNA ligase.